We begin with the raw amino-acid sequence, 264 residues long: Thymidylate synthase (264 aa).

Arginine 21 is a dUMP binding site. Residue histidine 51 participates in (6R)-5,10-methylene-5,6,7,8-tetrahydrofolate binding. Residue 126–127 (RR) participates in dUMP binding. Cysteine 146 acts as the Nucleophile in catalysis. DUMP-binding positions include 166-169 (RSAD), asparagine 177, and 207-209 (HLY). Aspartate 169 contacts (6R)-5,10-methylene-5,6,7,8-tetrahydrofolate. Alanine 263 provides a ligand contact to (6R)-5,10-methylene-5,6,7,8-tetrahydrofolate.

The protein belongs to the thymidylate synthase family. Bacterial-type ThyA subfamily. Homodimer.

The protein resides in the cytoplasm. It carries out the reaction dUMP + (6R)-5,10-methylene-5,6,7,8-tetrahydrofolate = 7,8-dihydrofolate + dTMP. Its pathway is pyrimidine metabolism; dTTP biosynthesis. In terms of biological role, catalyzes the reductive methylation of 2'-deoxyuridine-5'-monophosphate (dUMP) to 2'-deoxythymidine-5'-monophosphate (dTMP) while utilizing 5,10-methylenetetrahydrofolate (mTHF) as the methyl donor and reductant in the reaction, yielding dihydrofolate (DHF) as a by-product. This enzymatic reaction provides an intracellular de novo source of dTMP, an essential precursor for DNA biosynthesis. The sequence is that of Thymidylate synthase from Allorhizobium ampelinum (strain ATCC BAA-846 / DSM 112012 / S4) (Agrobacterium vitis (strain S4)).